Consider the following 348-residue polypeptide: MNPYVLMILISSLGLGTTLTFASSHWLLAWMGLEINTLAILRLMAQQHHPRAVEATTKYFLTQATAAAMILFAATTNAWATGEWDINNLTHPLASSLTMMALALKVGLAPMHFWMPEVLQGLDLTMGLILSTWQKLAPFALITQMAPNTNPMLLTTLGLLSTLIGGWGGLNQTQLRKILAYSSIAHMGWMIIILQYTPQLTLIALGLYIFMTSAAFLSLKMASATKMNTLTAAWSKSPVLVSTTALTLLSLGGLPPLTGFMPKWLILQELTKQDLPATATIMALAALLSLYFYLRLSYAMALTIYPNTTNALTPWRTNTTQSTLALALMMIGALGLLPLTPTIMALFF.

11 helical membrane passes run 3-23, 25-45, 60-80, 99-119, 122-142, 150-170, 178-196, 200-219, 246-266, 274-294, and 328-348; these read PYVL…TFAS, HWLL…RLMA, FLTQ…NAWA, MMAL…PEVL, LDLT…FALI, NPML…WGGL, ILAY…ILQY, LTLI…FLSL, LTLL…KWLI, DLPA…YFYL, and LMMI…ALFF.

The protein belongs to the complex I subunit 2 family.

It is found in the mitochondrion inner membrane. The enzyme catalyses a ubiquinone + NADH + 5 H(+)(in) = a ubiquinol + NAD(+) + 4 H(+)(out). Core subunit of the mitochondrial membrane respiratory chain NADH dehydrogenase (Complex I) that is believed to belong to the minimal assembly required for catalysis. Complex I functions in the transfer of electrons from NADH to the respiratory chain. The immediate electron acceptor for the enzyme is believed to be ubiquinone. This Formosania lacustris (Oriental stream loach) protein is NADH-ubiquinone oxidoreductase chain 2 (MT-ND2).